A 62-amino-acid polypeptide reads, in one-letter code: Large ribosomal subunit protein eL24 (62 aa).

Zn(2+)-binding residues include C6, C9, C32, and C36. Residues 6–36 (CSFCEGTIEPGCGKKYVKKDGSVMHFCSSKC) form a C4-type zinc finger.

It belongs to the eukaryotic ribosomal protein eL24 family. In terms of assembly, part of the 50S ribosomal subunit. Forms a cluster with proteins L3 and L14. Zn(2+) serves as cofactor.

Binds to the 23S rRNA. The chain is Large ribosomal subunit protein eL24 from Methanococcus maripaludis (strain C7 / ATCC BAA-1331).